The primary structure comprises 365 residues: tRNA/tmRNA (uracil-C(5))-methyltransferase (365 aa).

5 residues coordinate S-adenosyl-L-methionine: Q188, Y216, N221, E237, and D297. C322 (nucleophile) is an active-site residue. Residue E356 is the Proton acceptor of the active site.

Belongs to the class I-like SAM-binding methyltransferase superfamily. RNA M5U methyltransferase family. TrmA subfamily.

The enzyme catalyses uridine(54) in tRNA + S-adenosyl-L-methionine = 5-methyluridine(54) in tRNA + S-adenosyl-L-homocysteine + H(+). It catalyses the reaction uridine(341) in tmRNA + S-adenosyl-L-methionine = 5-methyluridine(341) in tmRNA + S-adenosyl-L-homocysteine + H(+). Functionally, dual-specificity methyltransferase that catalyzes the formation of 5-methyluridine at position 54 (m5U54) in all tRNAs, and that of position 341 (m5U341) in tmRNA (transfer-mRNA). The polypeptide is tRNA/tmRNA (uracil-C(5))-methyltransferase (Aggregatibacter aphrophilus (strain NJ8700) (Haemophilus aphrophilus)).